The primary structure comprises 462 residues: Argininosuccinate lyase (462 aa).

Belongs to the lyase 1 family. Argininosuccinate lyase subfamily.

The protein resides in the cytoplasm. It carries out the reaction 2-(N(omega)-L-arginino)succinate = fumarate + L-arginine. It functions in the pathway amino-acid biosynthesis; L-arginine biosynthesis; L-arginine from L-ornithine and carbamoyl phosphate: step 3/3. The polypeptide is Argininosuccinate lyase (Streptococcus agalactiae serotype Ia (strain ATCC 27591 / A909 / CDC SS700)).